Consider the following 98-residue polypeptide: Small ribosomal subunit protein uS19 (98 aa).

The disordered stretch occupies residues 77–98 (TRTFRGHAGGKAEKGGSAPKRK).

This sequence belongs to the universal ribosomal protein uS19 family.

Protein S19 forms a complex with S13 that binds strongly to the 16S ribosomal RNA. The chain is Small ribosomal subunit protein uS19 from Chlorobium luteolum (strain DSM 273 / BCRC 81028 / 2530) (Pelodictyon luteolum).